We begin with the raw amino-acid sequence, 532 residues long: Flavin-containing monooxygenase 1 (532 aa).

At Ala-2 the chain carries N-acetylalanine. At Ala-2–Pro-510 the chain is on the lumenal side. FAD is bound by residues Gly-9–Ser-13, Glu-32, Leu-40–Trp-41, and Asn-61–Ser-62. An NADP(+)-binding site is contributed by Ser-60 to Asn-61. Asn-120 is a glycosylation site (N-linked (GlcNAc...) (high mannose) asparagine). An NADP(+)-binding site is contributed by Ser-195–Asp-198. The helical transmembrane segment at Phe-511–Phe-531 threads the bilayer. A topological domain (cytoplasmic) is located at residue Leu-532.

This sequence belongs to the FMO family. The cofactor is FAD. As to expression, liver.

The protein localises to the endoplasmic reticulum membrane. It catalyses the reaction hypotaurine + NADPH + O2 + H(+) = taurine + NADP(+) + H2O. The enzyme catalyses hypotaurine + NADH + O2 + H(+) = taurine + NAD(+) + H2O. It carries out the reaction trimethylamine + NADPH + O2 = trimethylamine N-oxide + NADP(+) + H2O. The catalysed reaction is N,N-dimethylaniline + NADPH + O2 + H(+) = N,N-dimethylaniline N-oxide + NADP(+) + H2O. Broad spectrum monooxygenase that catalyzes the oxygenation of a wide variety of nitrogen- and sulfur-containing compounds including xenobiotics. Catalyzes the S-oxygenation of hypotaurine to produce taurine, an organic osmolyte involved in cell volume regulation as well as a variety of cytoprotective and developmental processes. In vitro, catalyzes the N-oxygenation of trimethylamine (TMA) to produce trimethylamine N-oxide (TMAO) and could therefore participate to the detoxification of this compound that is generated by the action of gut microbiota from dietary precursors such as choline, choline containing compounds, betaine or L-carnitine. The polypeptide is Flavin-containing monooxygenase 1 (FMO1) (Sus scrofa (Pig)).